Consider the following 364-residue polypeptide: Fructose-bisphosphate aldolase C (364 aa).

Position 5 is a phosphotyrosine (Tyr-5). Phosphoserine is present on residues Ser-36, Ser-39, and Ser-45. A substrate-binding site is contributed by Arg-56. Lys-111 bears the N6-acetyllysine mark. Position 132 is a phosphoserine (Ser-132). Lys-147 serves as a coordination point for substrate. Glu-188 serves as the catalytic Proton acceptor. The Schiff-base intermediate with dihydroxyacetone-P role is filled by Lys-230.

The protein belongs to the class I fructose-bisphosphate aldolase family. Homotetramer. Interacts with ATP6V1E1. May interact with PLD2.

It catalyses the reaction beta-D-fructose 1,6-bisphosphate = D-glyceraldehyde 3-phosphate + dihydroxyacetone phosphate. It functions in the pathway carbohydrate degradation; glycolysis; D-glyceraldehyde 3-phosphate and glycerone phosphate from D-glucose: step 4/4. This chain is Fructose-bisphosphate aldolase C (ALDOC), found in Homo sapiens (Human).